The sequence spans 310 residues: Pseudouridine-5'-phosphate glycosidase (310 aa).

Catalysis depends on Glu26, which acts as the Proton donor. 2 residues coordinate substrate: Lys87 and Val107. Residue Asp139 participates in Mn(2+) binding. 141–143 contributes to the substrate binding site; the sequence is SAD. The active-site Nucleophile is the Lys160.

It belongs to the pseudouridine-5'-phosphate glycosidase family. Homotrimer. It depends on Mn(2+) as a cofactor.

It carries out the reaction D-ribose 5-phosphate + uracil = psi-UMP + H2O. Functionally, catalyzes the reversible cleavage of pseudouridine 5'-phosphate (PsiMP) to ribose 5-phosphate and uracil. Functions biologically in the cleavage direction, as part of a pseudouridine degradation pathway. This chain is Pseudouridine-5'-phosphate glycosidase, found in Roseobacter denitrificans (strain ATCC 33942 / OCh 114) (Erythrobacter sp. (strain OCh 114)).